Reading from the N-terminus, the 340-residue chain is Protein phosphatase PTC7 homolog fig (340 aa).

In terms of domain architecture, PPM-type phosphatase spans 58 to 314 (RAQAETIQAP…DDITVVLASV (257 aa)). Mn(2+) contacts are provided by aspartate 90, glycine 91, and aspartate 236.

Belongs to the PP2C family. The cofactor is Mg(2+). Requires Mn(2+) as cofactor.

It carries out the reaction O-phospho-L-seryl-[protein] + H2O = L-seryl-[protein] + phosphate. It catalyses the reaction O-phospho-L-threonyl-[protein] + H2O = L-threonyl-[protein] + phosphate. This is Protein phosphatase PTC7 homolog fig from Drosophila pseudoobscura pseudoobscura (Fruit fly).